Consider the following 84-residue polypeptide: Small, acid-soluble spore protein gamma-type (84 aa).

2 stretches are compositionally biased toward polar residues: residues Met-1–Gly-25 and Ala-34–Lys-44. The disordered stretch occupies residues Met-1–Ser-84. Repeats lie at residues Gln-21–Gln-47 and Gln-48–Gln-74. 2 stretches are compositionally biased toward low complexity: residues Gln-45–Gly-57 and Gln-71–Ser-84.

It belongs to the gamma-type SASP family.

In terms of biological role, SASP are proteins degraded in the first minutes of spore germination and provide amino acids for both new protein synthesis and metabolism. These proteins may be involved in dormant spore's high resistance to UV light. The chain is Small, acid-soluble spore protein gamma-type (sspE) from Bacillus subtilis (strain 168).